The following is a 158-amino-acid chain: Large ribosomal subunit protein uL11 (158 aa).

The segment at Met1–Gly21 is disordered.

It belongs to the universal ribosomal protein uL11 family. Part of the ribosomal stalk of the 50S ribosomal subunit. Interacts with L10 and the large rRNA to form the base of the stalk. L10 forms an elongated spine to which L12 dimers bind in a sequential fashion forming a multimeric L10(L12)X complex.

In terms of biological role, forms part of the ribosomal stalk which helps the ribosome interact with GTP-bound translation factors. This is Large ribosomal subunit protein uL11 from Thermoplasma volcanium (strain ATCC 51530 / DSM 4299 / JCM 9571 / NBRC 15438 / GSS1).